The following is a 217-amino-acid chain: Ras-related protein RABA2a (217 aa).

Residue 19–26 coordinates GTP; it reads GDSGVGKS. Residues 41–49 carry the Effector region motif; sequence SKSTIGVEF. Residues 67–71, 125–128, and 155–156 each bind GTP; these read DTAGQ, NKTD, and SA. Residue Cys213 is the site of S-palmitoyl cysteine attachment. A Cysteine methyl ester modification is found at Cys214. Residue Cys214 is the site of S-geranylgeranyl cysteine attachment. A propeptide spans 215 to 217 (removed in mature form); the sequence is SSS.

The protein belongs to the small GTPase superfamily. Rab family. In terms of tissue distribution, expressed in root tips.

The protein resides in the endosome membrane. The protein localises to the golgi apparatus. It is found in the trans-Golgi network membrane. In terms of biological role, intracellular vesicle trafficking and protein transport. In Arabidopsis thaliana (Mouse-ear cress), this protein is Ras-related protein RABA2a (RABA2A).